Reading from the N-terminus, the 163-residue chain is Odorant-binding protein 1a (163 aa).

The N-terminal stretch at 1–16 is a signal peptide; the sequence is MAKFLLLALTFGLAHA. 2 disulfides stabilise this stretch: cysteine 50–cysteine 54 and cysteine 69–cysteine 161.

The protein belongs to the calycin superfamily. Lipocalin family. May form a heterodimer with OBP1B. Post-translationally, the N-terminus may be blocked. In terms of tissue distribution, expressed in nasal mucosa (at protein level). Specifically detected in septal and lateral nasal glands.

The protein resides in the secreted. In terms of biological role, binds the chemical odorant 2-isobutyl-3-methoxypyrazine. This chain is Odorant-binding protein 1a, found in Mus musculus (Mouse).